We begin with the raw amino-acid sequence, 308 residues long: Protein doublecortin (308 aa).

Residues Ala-21 to Pro-104 form the Doublecortin 1 domain. Positions Glu-115–Pro-167 are disordered. Positions Pro-141 to Pro-167 are enriched in low complexity. The region spanning Lys-194 to Ser-277 is the Doublecortin 2 domain. The interval Glu-282–Phe-308 is disordered. Low complexity predominate over residues Glu-291–Gln-300.

Interacts with lis1.

It is found in the cytoplasm. The protein resides in the cytoskeleton. Functionally, has a cytoskeleton-independent function in chemotactic signaling during development. The protein is Protein doublecortin (dcx) of Dictyostelium discoideum (Social amoeba).